The sequence spans 483 residues: Cobyric acid synthase (483 aa).

Positions 252–430 constitute a GATase cobBQ-type domain; it reads ALQVVAVAYP…LHRLFDSGPF (179 aa). Cys333 functions as the Nucleophile in the catalytic mechanism. Residue His422 is part of the active site.

It belongs to the CobB/CobQ family. CobQ subfamily.

Its pathway is cofactor biosynthesis; adenosylcobalamin biosynthesis. In terms of biological role, catalyzes amidations at positions B, D, E, and G on adenosylcobyrinic A,C-diamide. NH(2) groups are provided by glutamine, and one molecule of ATP is hydrogenolyzed for each amidation. This Halorhodospira halophila (strain DSM 244 / SL1) (Ectothiorhodospira halophila (strain DSM 244 / SL1)) protein is Cobyric acid synthase.